The chain runs to 510 residues: MDIRAAEISAILKDQIKNFGQEAEVTEVGQVLSVGDGIARVYGLDNVQAGEMVEFENGTRGMALNLETDNVGIVIFGADREIKEGQTVKRTRSIVDTPVGKGLLGRVVDALGNPIDGKGPIVATERKRVDVKAPGIIPRKSVHEPMATGLKSIDALIPIGRGQRELIIGDRQTGKTAIALDTILNQKPLNVEGAPEGQKLYCVYVAIGQKRSTVAQFVKVLEEQGALEYSIVVAATASDPAPMQYIAPFTGCTMGEYFRDNGMHAVIIYDDLSKQAVAYRQMSLLLRRPPGREAYPGDVFYLHSRLLERAAKLNDDEGNGSLTALPVIETQANDVSAYIPTNVISITDGQIFLETDLFFQGIRPAVNVGLSVSRVGSSAQTKAMKKVAGKIKGELAQYREMAAFAQFGSDLDASTQRLLNRGSRLTELLKQPQFSPLKMEEQVVVIYAGVNGYLDPLPVAKVRAFEDGLLSLLRGKNVEILNAIRDSRDLSDDTAGKLKAVVEAYAKTFA.

ATP is bound at residue 169-176; sequence GDRQTGKT.

The protein belongs to the ATPase alpha/beta chains family. F-type ATPases have 2 components, CF(1) - the catalytic core - and CF(0) - the membrane proton channel. CF(1) has five subunits: alpha(3), beta(3), gamma(1), delta(1), epsilon(1). CF(0) has four main subunits: a(1), b(1), b'(1) and c(9-12).

It localises to the cell inner membrane. It catalyses the reaction ATP + H2O + 4 H(+)(in) = ADP + phosphate + 5 H(+)(out). Produces ATP from ADP in the presence of a proton gradient across the membrane. The alpha chain is a regulatory subunit. The protein is ATP synthase subunit alpha of Rhodopseudomonas palustris (strain BisA53).